The following is a 114-amino-acid chain: Iron-sulfur cluster insertion protein ErpA (114 aa).

The iron-sulfur cluster site is built by C42, C106, and C108.

Belongs to the HesB/IscA family. As to quaternary structure, homodimer. The cofactor is iron-sulfur cluster.

Required for insertion of 4Fe-4S clusters for at least IspG. This is Iron-sulfur cluster insertion protein ErpA from Buchnera aphidicola subsp. Acyrthosiphon pisum (strain APS) (Acyrthosiphon pisum symbiotic bacterium).